A 465-amino-acid polypeptide reads, in one-letter code: GTPase Der (465 aa).

EngA-type G domains are found at residues 3 to 167 (PLVA…PERG) and 179 to 352 (IHIA…VSAL). GTP contacts are provided by residues 9–16 (GRPNVGKS), 57–61 (DTGGM), 119–122 (NKID), 185–192 (GRPNVGKS), 232–236 (DTAGL), and 297–300 (NKWD). In terms of domain architecture, KH-like spans 353 to 437 (RQFSTSEVNK…PVRFLFREGD (85 aa)).

The protein belongs to the TRAFAC class TrmE-Era-EngA-EngB-Septin-like GTPase superfamily. EngA (Der) GTPase family. Associates with the 50S ribosomal subunit.

Functionally, GTPase that plays an essential role in the late steps of ribosome biogenesis. The polypeptide is GTPase Der (Xylella fastidiosa (strain 9a5c)).